A 227-amino-acid polypeptide reads, in one-letter code: Orotidine 5'-phosphate decarboxylase (227 aa).

Substrate contacts are provided by residues Asp-8, Lys-30, 59-68, Thr-118, Arg-178, Gln-187, Gly-207, and Arg-208; that span reads DLKLYDIPYT. The Proton donor role is filled by Lys-61.

Belongs to the OMP decarboxylase family. Type 1 subfamily. As to quaternary structure, homodimer.

It carries out the reaction orotidine 5'-phosphate + H(+) = UMP + CO2. It functions in the pathway pyrimidine metabolism; UMP biosynthesis via de novo pathway; UMP from orotate: step 2/2. Functionally, catalyzes the decarboxylation of orotidine 5'-monophosphate (OMP) to uridine 5'-monophosphate (UMP). The polypeptide is Orotidine 5'-phosphate decarboxylase (Helicobacter pylori (strain P12)).